A 454-amino-acid chain; its full sequence is Chromosomal replication initiator protein DnaA (454 aa).

The domain I, interacts with DnaA modulators stretch occupies residues M1–Y79. Residues Y79–S117 are domain II. Residues N118–S334 are domain III, AAA+ region. ATP-binding residues include G162, G164, K165, and T166. The interval R335–K454 is domain IV, binds dsDNA.

This sequence belongs to the DnaA family. As to quaternary structure, oligomerizes as a right-handed, spiral filament on DNA at oriC.

It localises to the cytoplasm. Functionally, plays an essential role in the initiation and regulation of chromosomal replication. ATP-DnaA binds to the origin of replication (oriC) to initiate formation of the DNA replication initiation complex once per cell cycle. Binds the DnaA box (a 9 base pair repeat at the origin) and separates the double-stranded (ds)DNA. Forms a right-handed helical filament on oriC DNA; dsDNA binds to the exterior of the filament while single-stranded (ss)DNA is stabiized in the filament's interior. The ATP-DnaA-oriC complex binds and stabilizes one strand of the AT-rich DNA unwinding element (DUE), permitting loading of DNA polymerase. After initiation quickly degrades to an ADP-DnaA complex that is not apt for DNA replication. Binds acidic phospholipids. The chain is Chromosomal replication initiator protein DnaA from Buchnera aphidicola subsp. Acyrthosiphon pisum (strain 5A).